The chain runs to 420 residues: Putative RNA-binding protein Alsin2 (420 aa).

Positions 99 to 130 form a coiled coil; that stretch reads IADCDRRTDSAKQRLKETQEELTAEVAEKANA. Basic and acidic residues-rich tracts occupy residues 242–259, 282–363, and 373–399; these read AELK…EGRG, RERQ…RFGD, and HHRD…HFRD. Positions 242–420 are disordered; that stretch reads AELKRTGKMT…SYSRERNYRR (179 aa).

The protein belongs to the Luc7 family. As to quaternary structure, interacts with x16 (via Arg/Ser-rich region).

May bind to RNA via its Arg/Ser-rich domain. In Drosophila melanogaster (Fruit fly), this protein is Putative RNA-binding protein Alsin2.